The sequence spans 128 residues: MPPVFLPQIGRLTPDAVGEAIGIAADDIPMAARWIGSRPCSLIGQPNTMGDEMGYLGPGLAGQRCVDRLVMGASRSTCSRLPVIASVDERLSVLKPVRPRLHSISFIFKGRPGEVYLTVTGYNFRGVP.

This is an uncharacterized protein from Mycobacterium bovis (strain ATCC BAA-935 / AF2122/97).